A 617-amino-acid polypeptide reads, in one-letter code: Regulatory solute carrier protein family 1 member 1 (617 aa).

Over residues 1 to 22 (MSSLPTSDGFNHPARSSGQSPD) the composition is skewed to polar residues. Disordered regions lie at residues 1–106 (MSSL…EITV), 155–181 (ENQN…VAQQ), and 217–237 (KGNG…IPSS). Composition is skewed to basic and acidic residues over residues 43–52 (SDSDRIEPKA) and 66–83 (SEKK…HASS). Polar residues-rich tracts occupy residues 89 to 103 (TDQS…SSEE) and 155 to 165 (ENQNLSQVSDP). Residues 410 to 412 (QCP) form an involved in post-transcriptional down-regulation of SLC5A1 region. The 41-residue stretch at 571–611 (IFPATDIDRILRAGFTLQEALGALHRVGGNADLALLVLLAK) folds into the UBA domain.

In terms of assembly, interacts with YRDC. As to expression, expressed in small intestine, kidney and brain.

Its subcellular location is the cell membrane. The protein resides in the nucleus. It is found in the golgi apparatus. It localises to the trans-Golgi network. Functionally, mediates transcriptional and post-transcriptional regulation of SLC5A1. Inhibits a dynamin and PKC-dependent exocytotic pathway of SLC5A1. Also involved in transcriptional regulation of SLC22A2. Exhibits glucose-dependent, short-term inhibition of SLC5A1 and SLC22A2 by inhibiting the release of vesicles from the trans-Golgi network. This Homo sapiens (Human) protein is Regulatory solute carrier protein family 1 member 1 (RSC1A1).